The primary structure comprises 346 residues: Glucose-6-phosphatase 3 (346 aa).

Topologically, residues 1–24 (MESTLGAGIVIAEALQNQLAWLEN) are lumenal. A helical transmembrane segment spans residues 25 to 45 (VWLWITFLGDPKILFLFYFPA). Topologically, residues 46-54 (AYYASRRVG) are cytoplasmic. A helical transmembrane segment spans residues 55-75 (IAVLWISLITEWLNLIFKWFL). Over 76–114 (FGDRPFWWVHESGYYSQAPAQVHQFPSSCETGPGSPSGH) the chain is Lumenal. A substrate-binding site is contributed by Arg-79. Residue His-114 is the Proton donor of the active site. Residues 115-135 (CMITGAALWPIMTALSSQVAT) traverse the membrane as a helical segment. Topologically, residues 136–146 (RARSRWVRVMP) are cytoplasmic. The helical transmembrane segment at 147–164 (SLAYCTFLLAVGLSRIFI) threads the bilayer. Arg-161 provides a ligand contact to substrate. At 165 to 169 (LAHFP) the chain is on the lumenal side. His-167 (nucleophile) is an active-site residue. A helical transmembrane segment spans residues 170-186 (HQVLAGLITGAVLGWLM). At 187–197 (TPRVPMERELS) the chain is on the cytoplasmic side. The helical transmembrane segment at 198–218 (FYGLTALALMLGTSLIYWTLF) threads the bilayer. Topologically, residues 219-254 (TLGLDLSWSISLAFKWCERPEWIHVDSRPFASLSRD) are lumenal. Residues 255–273 (SGAALGLGIALHSPCYAQV) traverse the membrane as a helical segment. Residues 274-283 (RRAQLGNGQK) lie on the Cytoplasmic side of the membrane. The chain crosses the membrane as a helical span at residues 284 to 304 (IACLVLAMGLLGPLDWLGHPP). Residues 305–307 (QIS) are Lumenal-facing. The helical transmembrane segment at 308–328 (LFYIFNFLKYTLWPCLVLALV) threads the bilayer. Over 329–346 (PWAVHMFSAQEAPPIHSS) the chain is Cytoplasmic.

Belongs to the glucose-6-phosphatase family. In terms of tissue distribution, ubiquitously expressed. Highly expressed in skeletal muscle, at intermediate levels in heart, brain, placenta, kidney, colon, thymus, spleen and pancreas. Also detected in testis, prostate, ovary, liver, lung, small intestine and peripheral blood lymphocytes.

It localises to the endoplasmic reticulum membrane. The catalysed reaction is D-glucose 6-phosphate + H2O = D-glucose + phosphate. The protein operates within carbohydrate biosynthesis; gluconeogenesis. Inhibited by vanadate. Functionally, hydrolyzes glucose-6-phosphate to glucose in the endoplasmic reticulum. May form with the glucose-6-phosphate transporter (SLC37A4/G6PT) a ubiquitously expressed complex responsible for glucose production through glycogenolysis and gluconeogenesis. Probably required for normal neutrophil function. The polypeptide is Glucose-6-phosphatase 3 (G6PC3) (Homo sapiens (Human)).